The primary structure comprises 305 residues: D-alanine--D-alanine ligase (305 aa).

An ATP-grasp domain is found at 105-300; sequence KMIWQAAGIN…FDELVVQILE (196 aa). 131 to 186 contributes to the ATP binding site; sequence ADRLGLPLIIKPAREGSTLGLNKVDNEQDFRSAYQAAAEYDSLVLAEQFIQGIELT. The Mg(2+) site is built by Asp254, Glu267, and Asn269.

Belongs to the D-alanine--D-alanine ligase family. Requires Mg(2+) as cofactor. It depends on Mn(2+) as a cofactor.

The protein resides in the cytoplasm. It carries out the reaction 2 D-alanine + ATP = D-alanyl-D-alanine + ADP + phosphate + H(+). Its pathway is cell wall biogenesis; peptidoglycan biosynthesis. Functionally, cell wall formation. The protein is D-alanine--D-alanine ligase of Nitrosomonas europaea (strain ATCC 19718 / CIP 103999 / KCTC 2705 / NBRC 14298).